The following is a 125-amino-acid chain: Small ribosomal subunit protein uS12 (125 aa).

Asp89 bears the 3-methylthioaspartic acid mark. The disordered stretch occupies residues 101 to 125 (SLDTAGVKDRKQSRSKYGAKRPKKA). Positions 113–125 (SRSKYGAKRPKKA) are enriched in basic residues.

It belongs to the universal ribosomal protein uS12 family. In terms of assembly, part of the 30S ribosomal subunit. Contacts proteins S8 and S17. May interact with IF1 in the 30S initiation complex.

Its function is as follows. With S4 and S5 plays an important role in translational accuracy. Interacts with and stabilizes bases of the 16S rRNA that are involved in tRNA selection in the A site and with the mRNA backbone. Located at the interface of the 30S and 50S subunits, it traverses the body of the 30S subunit contacting proteins on the other side and probably holding the rRNA structure together. The combined cluster of proteins S8, S12 and S17 appears to hold together the shoulder and platform of the 30S subunit. The polypeptide is Small ribosomal subunit protein uS12 (Thiobacillus denitrificans (strain ATCC 25259 / T1)).